The chain runs to 160 residues: MRAVIQRVREASVTVAGEVVGAIGNGLLILLGVCHTDTAEDVELLAEKIAQLRIFSDHEGKFNLSLLDVGGAALVVSQFTLYADTRKGRRPSFTAAARPEIAAPLVDAFAAALRARNIPVATGVFGAMMQVALINDGPVTLVIDSAELRLPRRAGSRVDS.

A Gly-cisPro motif, important for rejection of L-amino acids motif is present at residues 137 to 138 (GP).

It belongs to the DTD family. As to quaternary structure, homodimer.

It is found in the cytoplasm. The catalysed reaction is glycyl-tRNA(Ala) + H2O = tRNA(Ala) + glycine + H(+). The enzyme catalyses a D-aminoacyl-tRNA + H2O = a tRNA + a D-alpha-amino acid + H(+). In terms of biological role, an aminoacyl-tRNA editing enzyme that deacylates mischarged D-aminoacyl-tRNAs. Also deacylates mischarged glycyl-tRNA(Ala), protecting cells against glycine mischarging by AlaRS. Acts via tRNA-based rather than protein-based catalysis; rejects L-amino acids rather than detecting D-amino acids in the active site. By recycling D-aminoacyl-tRNA to D-amino acids and free tRNA molecules, this enzyme counteracts the toxicity associated with the formation of D-aminoacyl-tRNA entities in vivo and helps enforce protein L-homochirality. In Chloroflexus aurantiacus (strain ATCC 29364 / DSM 637 / Y-400-fl), this protein is D-aminoacyl-tRNA deacylase.